The following is a 377-amino-acid chain: MSDSSHNLLYNKFELPESVKMSPVEGAVGGIDKVARFVADPLEKGMGHTLGSALRRALLIGLEAPAIVSFSMTGVLHEYMAVEGIIEDVTNIVLNLKGSLLKKYPLQDCEGGRCSQKLRATISVDASDLAAAGGQKEVTLGDLLQEGTFEAVNPEHVIFTVTRPMQLEVMLRVAFGRGYSPSERIVLEERGMNEIVLDAAFSPVVLVNYFVEDTRVGQDTDFDRLVLQVETDGRVAPKEAVAFATQILSKHFSVFEKMDEKRIVFEEAISVEKENKDDILHKLVLGINEIELSVRSTNCLSNANIETIGELVIMPEPRLLQFRNFGKKSLCEIKNKLKEMKLELGMDLSQFGVGLDNVKEKMKWYAEKIRSSKNTKG.

Positions 1-259 are alpha N-terminal domain (alpha-NTD); that stretch reads MSDSSHNLLY…KHFSVFEKMD (259 aa). The tract at residues 279–377 is alpha C-terminal domain (alpha-CTD); it reads ILHKLVLGIN…KIRSSKNTKG (99 aa).

The protein belongs to the RNA polymerase alpha chain family. As to quaternary structure, homodimer. The RNAP catalytic core consists of 2 alpha, 1 beta, 1 beta' and 1 omega subunit. When a sigma factor is associated with the core the holoenzyme is formed, which can initiate transcription.

It carries out the reaction RNA(n) + a ribonucleoside 5'-triphosphate = RNA(n+1) + diphosphate. DNA-dependent RNA polymerase catalyzes the transcription of DNA into RNA using the four ribonucleoside triphosphates as substrates. This Chlamydia trachomatis serovar L2 (strain ATCC VR-902B / DSM 19102 / 434/Bu) protein is DNA-directed RNA polymerase subunit alpha.